A 485-amino-acid chain; its full sequence is Peptidyl-prolyl cis-trans isomerase-like 4 (485 aa).

The 172-residue stretch at 1 to 172 folds into the PPIase cyclophilin-type domain; that stretch reads MSVLLETSAG…IDIRIKHTVI (172 aa). One can recognise an RRM domain in the interval 251–329; sequence NVLFVCKLNP…RRIHVDFSQS (79 aa). The segment at 377-485 is disordered; the sequence is NYRMVYGEEE…RDENDRRSRR (109 aa). Positions 426–485 are enriched in basic and acidic residues; that stretch reads RPRDRSRDRYHKPRDDRRGDRRDRDRRDQDRNRYRDRDHRDRGREKDRYGRDENDRRSRR.

The protein belongs to the cyclophilin-type PPIase family. PPIL4 subfamily.

It is found in the nucleus. It carries out the reaction [protein]-peptidylproline (omega=180) = [protein]-peptidylproline (omega=0). PPIases accelerate the folding of proteins. It catalyzes the cis-trans isomerization of proline imidic peptide bonds in oligopeptides. The polypeptide is Peptidyl-prolyl cis-trans isomerase-like 4 (CYP6) (Gibberella zeae (strain ATCC MYA-4620 / CBS 123657 / FGSC 9075 / NRRL 31084 / PH-1) (Wheat head blight fungus)).